A 784-amino-acid polypeptide reads, in one-letter code: Endonuclease MutS2 (784 aa).

An ATP-binding site is contributed by 335–342; it reads GPNTGGKT. Residues 709-784 form the Smr domain; sequence LDLRGERYED…GTGVTIVELK (76 aa).

Belongs to the DNA mismatch repair MutS family. MutS2 subfamily. In terms of assembly, homodimer. Binds to stalled ribosomes, contacting rRNA.

Its function is as follows. Endonuclease that is involved in the suppression of homologous recombination and thus may have a key role in the control of bacterial genetic diversity. In terms of biological role, acts as a ribosome collision sensor, splitting the ribosome into its 2 subunits. Detects stalled/collided 70S ribosomes which it binds and splits by an ATP-hydrolysis driven conformational change. Acts upstream of the ribosome quality control system (RQC), a ribosome-associated complex that mediates the extraction of incompletely synthesized nascent chains from stalled ribosomes and their subsequent degradation. Probably generates substrates for RQC. The chain is Endonuclease MutS2 from Geobacillus kaustophilus (strain HTA426).